Reading from the N-terminus, the 735-residue chain is Translation factor GUF1 homolog, chloroplastic (735 aa).

Disordered stretches follow at residues 1–38 (MAVP…PSTS) and 106–126 (PENA…GVDN). Residues 1 to 47 (MAVPTIPSPACISQSANGSIISTRRSTETNPRQHPSTSYRCAGRVVR) constitute a chloroplast transit peptide. A compositionally biased stretch (polar residues) spans 11–38 (CISQSANGSIISTRRSTETNPRQHPSTS). The segment covering 106–115 (PENAEKDYSK) has biased composition (basic and acidic residues). The region spanning 137–319 (SNIRNFSIIA…AVVKKIPPPK (183 aa)) is the tr-type G domain. GTP is bound by residues 146–153 (AHIDHGKS), 212–216 (DTPGH), and 266–269 (NKID).

The protein belongs to the TRAFAC class translation factor GTPase superfamily. Classic translation factor GTPase family. LepA subfamily.

It localises to the plastid. Its subcellular location is the chloroplast. It catalyses the reaction GTP + H2O = GDP + phosphate + H(+). Functionally, promotes chloroplast protein synthesis. May act as a fidelity factor of the translation reaction, by catalyzing a one-codon backward translocation of tRNAs on improperly translocated ribosomes. The protein is Translation factor GUF1 homolog, chloroplastic of Physcomitrium patens (Spreading-leaved earth moss).